Reading from the N-terminus, the 373-residue chain is 2-phosphonomethylmalate synthase (373 aa).

Residues 5 to 256 (LVLEDTTLRD…DLGIDLTKLK (252 aa)) form the Pyruvate carboxyltransferase domain.

It belongs to the alpha-IPM synthase/homocitrate synthase family.

It catalyses the reaction 3-phosphonopyruvate + acetyl-CoA + H2O = (R)-2-(phosphonomethyl)malate + CoA + H(+). Its pathway is antibiotic biosynthesis. In terms of biological role, acyltransferase involved in the biosynthesis of the phosphonate antibiotic FR-900098, a potent antimalarial agent that acts as an inhibitor of 1-deoxy-D-xylulose 5-phosphate reductoisomerase (DXR), the first enzyme in the nonmevalonate pathway for isoprenoid biosynthesis. Catalyzes the condensation between acetyl-CoA and phosphonopyruvate to yield (R)-2-(phosphonomethyl)malate. The chain is 2-phosphonomethylmalate synthase from Streptomyces rubellomurinus (strain ATCC 31215).